Here is a 616-residue protein sequence, read N- to C-terminus: Chaperone protein HscA (616 aa).

Belongs to the heat shock protein 70 family.

Its function is as follows. Chaperone involved in the maturation of iron-sulfur cluster-containing proteins. Has a low intrinsic ATPase activity which is markedly stimulated by HscB. Involved in the maturation of IscU. The polypeptide is Chaperone protein HscA (Yersinia enterocolitica serotype O:8 / biotype 1B (strain NCTC 13174 / 8081)).